A 188-amino-acid polypeptide reads, in one-letter code: dCTP deaminase (188 aa).

Residues 111 to 116, 135 to 137, Gln-156, Tyr-170, and Gln-180 each bind dCTP; these read KSTYAR and TLE. The active-site Proton donor/acceptor is Glu-137.

The protein belongs to the dCTP deaminase family. As to quaternary structure, homotrimer.

It carries out the reaction dCTP + H2O + H(+) = dUTP + NH4(+). The protein operates within pyrimidine metabolism; dUMP biosynthesis; dUMP from dCTP (dUTP route): step 1/2. Functionally, catalyzes the deamination of dCTP to dUTP. In Azotobacter vinelandii (strain DJ / ATCC BAA-1303), this protein is dCTP deaminase.